Reading from the N-terminus, the 974-residue chain is RING finger protein nhl-1 (974 aa).

The interval 1–29 (MSSSPQNEAEAREKMRELMSRPPSSRPAD) is disordered. Residues 9-19 (AEAREKMRELM) are compositionally biased toward basic and acidic residues. The RING-type zinc-finger motif lies at 43 to 84 (CPICLDRYKQPKLLPCQHTFCYPCLESCADTLHRNLKCPECR). Disordered regions lie at residues 360-395 (VKSD…IRYR) and 416-548 (SLLT…DFPV). Residues 416–431 (SLLTTSVTADSSSRTS) show a composition bias toward polar residues. Residues 437 to 446 (RVTRSVEPTK) are compositionally biased toward basic and acidic residues. Positions 447-465 (SRPTSLIVPNTETPRTVSP) are enriched in polar residues. Residues 488–501 (APLPQLPIRKPPLP) are compositionally biased toward pro residues. Residues 511–528 (LNEKVETIRRAHQQRQDA) show a composition bias toward basic and acidic residues. Positions 529–538 (SRAASRAVSS) are enriched in low complexity. NHL repeat units follow at residues 699-742 (RAVF…FDKD), 746-788 (VRQF…FGLE), 792-835 (LFSF…FDKN), 839-883 (IAKF…FDPH), 887-930 (LFSF…FDAQ), and 934-974 (VSSF…IQIF).

As to quaternary structure, interacts with ubc-13.

In Caenorhabditis elegans, this protein is RING finger protein nhl-1.